The primary structure comprises 340 residues: Hyaluronan and proteoglycan link protein 2 (340 aa).

The N-terminal stretch at 1-26 is a signal peptide; that stretch reads MPGWLTLPTLCRFLLWAFTIFHKAQG. One can recognise an Ig-like V-type domain in the interval 34–144; the sequence is PHYLLPPIHE…EDESVALTLS (111 aa). 5 disulfides stabilise this stretch: Cys57/Cys128, Cys170/Cys240, Cys194/Cys215, Cys265/Cys336, and Cys290/Cys311. 2 consecutive Link domains span residues 148–242 and 245–338; these read VVFP…FCFT and LAGQ…YCYA.

Belongs to the HAPLN family. Expressed only in adult brain.

It is found in the secreted. It localises to the extracellular space. The protein resides in the extracellular matrix. Functionally, mediates a firm binding of versican V2 to hyaluronic acid. May play a pivotal role in the formation of the hyaluronan-associated matrix in the central nervous system (CNS) which facilitates neuronal conduction and general structural stabilization. Binds to hyaluronic acid. The polypeptide is Hyaluronan and proteoglycan link protein 2 (HAPLN2) (Homo sapiens (Human)).